Consider the following 209-residue polypeptide: Chaperone protein TorD (209 aa).

Belongs to the TorD/DmsD family. TorD subfamily.

The protein resides in the cytoplasm. Involved in the biogenesis of TorA. Acts on TorA before the insertion of the molybdenum cofactor and, as a result, probably favors a conformation of the apoenzyme that is competent for acquiring the cofactor. The polypeptide is Chaperone protein TorD (Shewanella baltica (strain OS185)).